Here is a 425-residue protein sequence, read N- to C-terminus: Gamma-glutamyl phosphate reductase (425 aa).

This sequence belongs to the gamma-glutamyl phosphate reductase family.

It localises to the cytoplasm. The enzyme catalyses L-glutamate 5-semialdehyde + phosphate + NADP(+) = L-glutamyl 5-phosphate + NADPH + H(+). Its pathway is amino-acid biosynthesis; L-proline biosynthesis; L-glutamate 5-semialdehyde from L-glutamate: step 2/2. Its function is as follows. Catalyzes the NADPH-dependent reduction of L-glutamate 5-phosphate into L-glutamate 5-semialdehyde and phosphate. The product spontaneously undergoes cyclization to form 1-pyrroline-5-carboxylate. The chain is Gamma-glutamyl phosphate reductase from Opitutus terrae (strain DSM 11246 / JCM 15787 / PB90-1).